Here is a 387-residue protein sequence, read N- to C-terminus: 3-ketoacyl-CoA thiolase (387 aa).

Catalysis depends on cysteine 91, which acts as the Acyl-thioester intermediate. Residues histidine 343 and cysteine 373 each act as proton acceptor in the active site.

It belongs to the thiolase-like superfamily. Thiolase family. As to quaternary structure, heterotetramer of two alpha chains (FadB) and two beta chains (FadA).

It localises to the cytoplasm. The enzyme catalyses an acyl-CoA + acetyl-CoA = a 3-oxoacyl-CoA + CoA. It participates in lipid metabolism; fatty acid beta-oxidation. In terms of biological role, catalyzes the final step of fatty acid oxidation in which acetyl-CoA is released and the CoA ester of a fatty acid two carbons shorter is formed. The polypeptide is 3-ketoacyl-CoA thiolase (Shewanella frigidimarina (strain NCIMB 400)).